A 273-amino-acid chain; its full sequence is Protein FAM216A (273 aa).

The tract at residues 1 to 47 is disordered; sequence MLGQLLPHTARGLGAAEMPGQGPGSDWTERSSSAEPPAVAGTEGGGG.

Belongs to the FAM216 family.

The polypeptide is Protein FAM216A (FAM216A) (Homo sapiens (Human)).